A 456-amino-acid polypeptide reads, in one-letter code: MVSDFFFPQPGGIESHIFQLSQRLIDLGHKVIVITHAYKDRVGVRYLTNGLTVYYVPLHTVYRETTFPSFFSFFPIFRNIVIRENIEIVHGHGSLSFLCHDAILHARTMGLKTCFTDHSLFGFADAGSIVTNKLLKFTMSDVNHVICVSHTCRENTVLRAVLNPKRVSVIPNALVAENFQPDPSKASKDFLTIVVISRLYYNKGIDLLIAVIPRICAQHPKVRFVIAGDGPKSIDLEQMREKYMLQDRVEMLGSVRHDQVRDVMVRGHIYLHPSLTEAFGTVLVEAASCGLYVISTKVGGVPEVLPSHMTRFARPEEDDLADTLSSVITDYLDHKIKTETFHEEVKQMYSWIDVAERTEKVYDSICSENNLRLIDRLKLYYGCGQWAGKLFCLLIAIDYLVMVLLEWIWPASDIDPAVDRVSSTFKISKQNFDESLVLTDPKKKTKIKTACLKDAQ.

Belongs to the glycosyltransferase group 1 family. Glycosyltransferase 4 subfamily. As to quaternary structure, component of a Phosphatidylinositol N-acetylglucosaminyltransferase complex.

The catalysed reaction is a 1,2-diacyl-sn-glycero-3-phospho-(1D-myo-inositol) + UDP-N-acetyl-alpha-D-glucosamine = a 6-(N-acetyl-alpha-D-glucosaminyl)-1-(1,2-diacyl-sn-glycero-3-phospho)-1D-myo-inositol + UDP + H(+). It functions in the pathway glycolipid biosynthesis; glycosylphosphatidylinositol-anchor biosynthesis. In terms of biological role, catalytic subunit in the complex catalyzing the transfer of N-acetylglucosamine from UDP-N-acetylglucosamine to phosphatidylinositol, the first step of GPI biosynthesis. The chain is Phosphatidylinositol N-acetylglucosaminyltransferase gpi3 subunit (gpi3) from Schizosaccharomyces pombe (strain 972 / ATCC 24843) (Fission yeast).